A 306-amino-acid chain; its full sequence is D-alanine--D-alanine ligase (306 aa).

In terms of domain architecture, ATP-grasp spans 101–300; the sequence is KVVMAAAGIP…FGELVTWMVE (200 aa). 128 to 182 contacts ATP; it reads LPPPYVLKPNTGGSSVGVFIVKEDQPHPPQELFRADWTFGESLMAEPFIKGLELT. Mg(2+) is bound by residues aspartate 250, glutamate 267, and asparagine 269.

It belongs to the D-alanine--D-alanine ligase family. Mg(2+) serves as cofactor. Requires Mn(2+) as cofactor.

The protein localises to the cytoplasm. The catalysed reaction is 2 D-alanine + ATP = D-alanyl-D-alanine + ADP + phosphate + H(+). It participates in cell wall biogenesis; peptidoglycan biosynthesis. Cell wall formation. The polypeptide is D-alanine--D-alanine ligase (Azorhizobium caulinodans (strain ATCC 43989 / DSM 5975 / JCM 20966 / LMG 6465 / NBRC 14845 / NCIMB 13405 / ORS 571)).